A 183-amino-acid chain; its full sequence is Dermatopontin (183 aa).

Gln1 carries the post-translational modification Pyrrolidone carboxylic acid. Tyr5 is subject to Sulfotyrosine. A run of 4 repeats spans residues 8–61 (PYQQ…ACMP), 52–57 (DRQWNY), 62–117 (TPQS…CCRY), and 107–112 (DREWQF). The 2 X 53-55 AA tandem repeats stretch occupies residues 8–117 (PYQQYHDYSD…REWQFYCCRY (110 aa)). 5 cysteine pairs are disulfide-bonded: Cys32-Cys59, Cys72-Cys114, Cys88-Cys115, Cys121-Cys178, and Cys125-Cys171. The tract at residues 52-168 (DRQWNYACMP…AVERDRQWKF (117 aa)) is 3 X 6 AA tandem repeats of D-R-[EQ]-W-[NQK]-[FY]. Residues Tyr144, Tyr146, Tyr148, and Tyr149 each carry the sulfotyrosine modification. A 2-3 repeat occupies 163-168 (DRQWKF). Sulfotyrosine is present on Tyr176.

Belongs to the dermatopontin family. As to quaternary structure, interacts with TGFB1, DCN and collagen. Post-translationally, sulfated on tyrosine residue(s). In terms of tissue distribution, detected in skin, skeletal muscle, heart, lung, articular cartilage, long bone and calvaria. Smaller amounts detected in kidney. Not detected in brain, liver or spleen.

It localises to the secreted. The protein resides in the extracellular space. The protein localises to the extracellular matrix. Seems to mediate adhesion by cell surface integrin binding. May serve as a communication link between the dermal fibroblast cell surface and its extracellular matrix environment. Enhances TGFB1 activity. Inhibits cell proliferation. Accelerates collagen fibril formation, and stabilizes collagen fibrils against low-temperature dissociation. This is Dermatopontin (DPT) from Sus scrofa (Pig).